The primary structure comprises 129 residues: Follitropin subunit beta (129 aa).

An N-terminal signal peptide occupies residues 1-18 (MKSVQLCLLLWCWRAICC). Disulfide bonds link C21–C69, C35–C84, C38–C122, C46–C100, C50–C102, and C105–C112. 2 N-linked (GlcNAc...) asparagine glycosylation sites follow: N25 and N42.

This sequence belongs to the glycoprotein hormones subunit beta family. Heterodimer. The active follitropin is a heterodimer composed of an alpha chain/CGA shared with other hormones and a unique beta chain/FSHB shown here.

The protein resides in the secreted. In terms of biological role, together with the alpha chain CGA constitutes follitropin, the follicle-stimulating hormone, and provides its biological specificity to the hormone heterodimer. Binds FSHR, a G protein-coupled receptor, on target cells to activate downstream signaling pathways. Follitropin is involved in follicle development and spermatogenesis in reproductive organs. This is Follitropin subunit beta (FSHB) from Meriones unguiculatus (Mongolian jird).